Here is a 455-residue protein sequence, read N- to C-terminus: Pup--protein ligase (455 aa).

Glu-12 provides a ligand contact to Mg(2+). Arg-56 is an ATP binding site. Position 58 (Tyr-58) interacts with Mg(2+). Asp-60 serves as the catalytic Proton acceptor. Position 66 (Glu-66) interacts with Mg(2+). ATP is bound by residues Thr-69 and Trp-422.

It belongs to the Pup ligase/Pup deamidase family. Pup-conjugating enzyme subfamily.

The enzyme catalyses ATP + [prokaryotic ubiquitin-like protein]-L-glutamate + [protein]-L-lysine = ADP + phosphate + N(6)-([prokaryotic ubiquitin-like protein]-gamma-L-glutamyl)-[protein]-L-lysine.. Its pathway is protein degradation; proteasomal Pup-dependent pathway. The protein operates within protein modification; protein pupylation. In terms of biological role, catalyzes the covalent attachment of the prokaryotic ubiquitin-like protein modifier Pup to the proteasomal substrate proteins, thereby targeting them for proteasomal degradation. This tagging system is termed pupylation. The ligation reaction involves the side-chain carboxylate of the C-terminal glutamate of Pup and the side-chain amino group of a substrate lysine. The polypeptide is Pup--protein ligase (Acidimicrobium ferrooxidans (strain DSM 10331 / JCM 15462 / NBRC 103882 / ICP)).